We begin with the raw amino-acid sequence, 454 residues long: Mitochondrial dynamics protein MID49 (454 aa).

Topologically, residues 1-22 (MAEFSQKRGKRRSDEGLGSMVD) are mitochondrial intermembrane. Phosphoserine is present on Ser-13. A helical transmembrane segment spans residues 23-43 (FLLANARLVLGVGGAAVLGIA). At 44–454 (TLAVKRFIDR…SGLQEPEGLL (411 aa)) the chain is on the cytoplasmic side. The segment at 76 to 119 (ATPHLQPRPPPAALSQPVLPLAPSSSAPEGPAETDPEVTPQLSS) is disordered. The segment covering 88–103 (ALSQPVLPLAPSSSAP) has biased composition (low complexity).

The protein belongs to the MID49/MID51 family. As to quaternary structure, interacts with DNM1L. Expressed in all tissues tested with highest expression in heart and skeletal muscle.

It is found in the mitochondrion outer membrane. Functionally, mitochondrial outer membrane protein involved in the regulation of mitochondrial organization. It is required for mitochondrial fission and promotes the recruitment and association of the fission mediator dynamin-related protein 1 (DNM1L) to the mitochondrial surface independently of the mitochondrial fission FIS1 and MFF proteins. Regulates DNM1L GTPase activity. This is Mitochondrial dynamics protein MID49 (MIEF2) from Homo sapiens (Human).